Reading from the N-terminus, the 112-residue chain is Ig kappa chain V-III region PC 7132 (112 aa).

A framework-1 region spans residues 1 to 23; that stretch reads DIVLTQSPASLAVSLGQRATISC. A disulfide bridge connects residues cysteine 23 and cysteine 92. The complementarity-determining-1 stretch occupies residues 24-38; it reads RASESVDNYGISFMN. Residues 39–53 form a framework-2 region; it reads WFQQKPGQPPKLLIY. The segment at 54-60 is complementarity-determining-2; it reads AASNQGS. The interval 61–92 is framework-3; it reads GVPARFSGSGSGTDFSLNIHPMEEDDTAMYFC. Positions 93-102 are complementarity-determining-3; the sequence is QQSKEVPPYT. The interval 103-112 is framework-4; it reads FGGGTKLEIK.

This Mus musculus (Mouse) protein is Ig kappa chain V-III region PC 7132.